We begin with the raw amino-acid sequence, 131 residues long: Small ribosomal subunit protein uS8 (131 aa).

This sequence belongs to the universal ribosomal protein uS8 family. Part of the 30S ribosomal subunit. Contacts proteins S5 and S12.

Functionally, one of the primary rRNA binding proteins, it binds directly to 16S rRNA central domain where it helps coordinate assembly of the platform of the 30S subunit. The protein is Small ribosomal subunit protein uS8 of Zymomonas mobilis subsp. mobilis (strain ATCC 31821 / ZM4 / CP4).